The sequence spans 260 residues: Putative imidazole glycerol phosphate synthase subunit hisF3 (260 aa).

The active site involves D135.

It belongs to the HisA/HisF family. Heterodimer of HisH and HisF.

The protein localises to the cytoplasm. It carries out the reaction 5-[(5-phospho-1-deoxy-D-ribulos-1-ylimino)methylamino]-1-(5-phospho-beta-D-ribosyl)imidazole-4-carboxamide + L-glutamine = D-erythro-1-(imidazol-4-yl)glycerol 3-phosphate + 5-amino-1-(5-phospho-beta-D-ribosyl)imidazole-4-carboxamide + L-glutamate + H(+). The protein operates within amino-acid biosynthesis; L-histidine biosynthesis; L-histidine from 5-phospho-alpha-D-ribose 1-diphosphate: step 5/9. In terms of biological role, IGPS catalyzes the conversion of PRFAR and glutamine to IGP, AICAR and glutamate. The HisF subunit catalyzes the cyclization activity that produces IGP and AICAR from PRFAR using the ammonia provided by the HisH subunit. The polypeptide is Putative imidazole glycerol phosphate synthase subunit hisF3 (hisF3) (Vibrio vulnificus (strain YJ016)).